We begin with the raw amino-acid sequence, 103 residues long: Small ribosomal subunit protein uS10 (103 aa).

The protein belongs to the universal ribosomal protein uS10 family. As to quaternary structure, part of the 30S ribosomal subunit.

Its function is as follows. Involved in the binding of tRNA to the ribosomes. This Campylobacter jejuni subsp. jejuni serotype O:6 (strain 81116 / NCTC 11828) protein is Small ribosomal subunit protein uS10.